Consider the following 181-residue polypeptide: D-lyxose/D-mannose isomerase (181 aa).

Mn(2+) is bound by residues His-75, His-77, Glu-88, and His-143.

Belongs to the D-lyxose ketol-isomerase family. As to quaternary structure, homodimer. Mn(2+) is required as a cofactor.

It catalyses the reaction D-lyxose = D-xylulose. The catalysed reaction is D-mannose = D-fructose. Its function is as follows. Sugar isomerase that catalyzes the reversible isomerization of D-lyxose to D-xylulose, and D-mannose to D-fructose. Shows optimum activity using D-lyxose as substrate, but can also effectively catalyze the isomerization between D-fructose and D-mannose. This chain is D-lyxose/D-mannose isomerase, found in Thermosediminibacter oceani (strain ATCC BAA-1034 / DSM 16646 / JW/IW-1228P).